We begin with the raw amino-acid sequence, 1366 residues long: ABC multidrug transporter MDR2 (1366 aa).

The chain crosses the membrane as a helical span at residues 52–72 (IALIVIGTIAGIGAGIPFPLL). Residues 56–354 (VIGTIAGIGA…MAPFMHIFAS (299 aa)) form the ABC transmembrane type-1 1 domain. Asn84 carries an N-linked (GlcNAc...) asparagine glycan. 5 helical membrane passes run 106–126 (VLQVIYASILNFVCMYIHTGC), 180–200 (KVGLFIGTISYFVAAYIVAFL), 202–222 (VATIAAMLMSVVPIYFLMAFG), 288–308 (IQFGMLYFVAYASNALAFWQG), and 323–343 (VSVGAVYTVIFVLLDASFVLS). An ABC transporter 1 domain is found at 390–669 (IELQDVTFNY…DGVYAGMVRL (280 aa)). Residue 425–432 (GTSGSGKS) coordinates ATP. Asn620 carries N-linked (GlcNAc...) asparagine glycosylation. Positions 727–746 (PEEADSLPTEPEAKKEKPKQ) are disordered. The next 4 helical transmembrane spans lie at 768-788 (LGLITSIMIGVSYTGEAVIFG), 807-827 (GMLFGLLFFILAVAKFAAVIV), 868-888 (LLVALVTSDASALSSLTGTTI), and 898-918 (LFAGVILSHVIAWKIAVVLLA). The 288-residue stretch at 768 to 1055 (LGLITSIMIG…MFALVPDISK (288 aa)) folds into the ABC transmembrane type-1 2 domain. Residue Asn976 is glycosylated (N-linked (GlcNAc...) asparagine). Helical transmembrane passes span 995-1015 (FWLSLAYSISTLVYALAYWWG) and 1019-1039 (ILAGMYTQVQFFIVLPALLFS). One can recognise an ABC transporter 2 domain in the interval 1122–1361 (VQFRNVHFRY…CESYRANVIH (240 aa)). ATP is bound at residue 1157–1164 (GPSGSGKS).

It belongs to the ABC transporter superfamily. ABCB family. Multidrug resistance exporter (TC 3.A.1.201) subfamily.

The protein localises to the cell membrane. Functionally, pleiotropic ABC efflux transporter that may be involved in the modulation susceptibility to a wide range of unrelated cytotoxic compounds. Does not act as an efflux pump for azoles, including fluconazole, itraconazole, ketoconazole, miconazole and voriconazole, nor does it modulate susceptibility to cycloheximide. The polypeptide is ABC multidrug transporter MDR2 (Trichophyton rubrum (strain ATCC MYA-4607 / CBS 118892) (Athlete's foot fungus)).